The chain runs to 242 residues: MVESKVVVPESVLKKRKREEEWALEKKQNVEAAKKKNAENRKLIFKRAEQYSKEYAEKEKELISLKREAKLKGGFYVDPEAKLLFIIRIRGINAIDPKTKKILQLLRLRQIFNGVFLKVNKATMNMLRRVEPYVTYGFPNLKSVKELIYKRGYGKLNHQRIALTDNSIVEQALGKHGIICTEDLIHEILTVGPHFKEANNFLWPFQLKAPLGGLKKKRNHYVEGGDAGNRENFINELIRRMN.

This sequence belongs to the universal ribosomal protein uL30 family.

The chain is Large ribosomal subunit protein uL30y (RPL7B) from Arabidopsis thaliana (Mouse-ear cress).